The following is a 322-amino-acid chain: MNTVGTPLLWGGFAVVVVIMLSIDLLLQGRRGAHAMSMKQAAGWSILWVTLSLLFNAAFWWYLAETQGREVADPQALAFLTGYLIEKSLAVDNVFVWLMLFSYFSVPPALQRRVLVYGVLGAIVLRTIMIFAGTWLITQFEWLLYVFGAFLLFTGVKMALAKEDESGIGEKPMVRWLRGHLRMTDTIENEHFFVRKNGLLYATPLLLVLIMVEFSDVIFAVDSIPAIFAVTTDPFIVLTSNLFAILGLRAMYFLLSGVAERFSMLKYGLAVILVFIGIKMLIVDFYHIPIAISLGVVFGILTITLVINTWVNHQRDKKLRAQ.

The Periplasmic portion of the chain corresponds to 1–6; the sequence is MNTVGT. The helical transmembrane segment at 7-27 threads the bilayer; that stretch reads PLLWGGFAVVVVIMLSIDLLL. At 28–43 the chain is on the cytoplasmic side; it reads QGRRGAHAMSMKQAAG. A helical membrane pass occupies residues 44–64; it reads WSILWVTLSLLFNAAFWWYLA. Residues 65-89 are Periplasmic-facing; sequence ETQGREVADPQALAFLTGYLIEKSL. Residues 90–110 form a helical membrane-spanning segment; it reads AVDNVFVWLMLFSYFSVPPAL. The Cytoplasmic portion of the chain corresponds to 111–113; sequence QRR. Residues 114–134 form a helical membrane-spanning segment; it reads VLVYGVLGAIVLRTIMIFAGT. Residue Trp-135 is a topological domain, periplasmic. Residues 136–156 traverse the membrane as a helical segment; the sequence is LITQFEWLLYVFGAFLLFTGV. Over 157–198 the chain is Cytoplasmic; the sequence is KMALAKEDESGIGEKPMVRWLRGHLRMTDTIENEHFFVRKNG. The chain crosses the membrane as a helical span at residues 199 to 219; sequence LLYATPLLLVLIMVEFSDVIF. The Periplasmic segment spans residues 220–225; that stretch reads AVDSIP. Residues 226–246 form a helical membrane-spanning segment; that stretch reads AIFAVTTDPFIVLTSNLFAIL. The Cytoplasmic portion of the chain corresponds to 247 to 261; that stretch reads GLRAMYFLLSGVAER. Residues 262–282 form a helical membrane-spanning segment; sequence FSMLKYGLAVILVFIGIKMLI. The Periplasmic portion of the chain corresponds to 283-286; the sequence is VDFY. Residues 287-307 form a helical membrane-spanning segment; sequence HIPIAISLGVVFGILTITLVI. Residues 308–321 are Cytoplasmic-facing; the sequence is NTWVNHQRDKKLRA.

The protein belongs to the TerC family.

It localises to the cell inner membrane. Functionally, has been proposed to be a redox modulator. This is Putative membrane-bound redox modulator Alx (alx) from Salmonella typhi.